The sequence spans 44 residues: Large ribosomal subunit protein bL34 (44 aa).

Positions 21-44 are disordered; that stretch reads RMDTSGGRRILSARRRKGRKTISA. Basic residues predominate over residues 31–44; sequence LSARRRKGRKTISA.

The protein belongs to the bacterial ribosomal protein bL34 family.

This chain is Large ribosomal subunit protein bL34, found in Endomicrobium trichonymphae.